The sequence spans 310 residues: Pantothenate kinase (310 aa).

95–102 lines the ATP pocket; that stretch reads GSVAVGKS.

It belongs to the prokaryotic pantothenate kinase family.

The protein resides in the cytoplasm. The catalysed reaction is (R)-pantothenate + ATP = (R)-4'-phosphopantothenate + ADP + H(+). Its pathway is cofactor biosynthesis; coenzyme A biosynthesis; CoA from (R)-pantothenate: step 1/5. The sequence is that of Pantothenate kinase from Rhodococcus erythropolis (strain PR4 / NBRC 100887).